The primary structure comprises 234 residues: Two-component response regulator ARR9 (234 aa).

Positions 10 to 147 constitute a Response regulatory domain; that stretch reads HVLAVDDSLF…DLNKLKPHMM (138 aa). Asp80 is subject to 4-aspartylphosphate.

The protein belongs to the ARR family. Type-A subfamily. As to quaternary structure, interacts with AHP1 and AHP3. Post-translationally, two-component system major event consists of a His-to-Asp phosphorelay between a sensor histidine kinase (HK) and a response regulator (RR). In plants, the His-to-Asp phosphorelay involves an additional intermediate named Histidine-containing phosphotransfer protein (HPt). This multistep phosphorelay consists of a His-Asp-His-Asp sequential transfer of a phosphate group between first a His and an Asp of the HK protein, followed by the transfer to a conserved His of the HPt protein and finally the transfer to an Asp in the receiver domain of the RR protein. In terms of tissue distribution, predominantly expressed in roots.

It is found in the nucleus. Functions as a response regulator involved in His-to-Asp phosphorelay signal transduction system. Phosphorylation of the Asp residue in the receiver domain activates the ability of the protein to promote the transcription of target genes. Type-A response regulators seem to act as negative regulators of the cytokinin signaling. This Arabidopsis thaliana (Mouse-ear cress) protein is Two-component response regulator ARR9 (ARR9).